A 428-amino-acid chain; its full sequence is Maltoporin (428 aa).

Residues 1 to 24 form the signal peptide; the sequence is MKSMRILPISLTIMAGLLSIEASA.

The protein belongs to the porin LamB (TC 1.B.3) family. As to quaternary structure, homotrimer formed of three 18-stranded antiparallel beta-barrels, containing three independent channels.

It is found in the cell outer membrane. The enzyme catalyses beta-maltose(in) = beta-maltose(out). Functionally, involved in the transport of maltose and maltodextrins. The chain is Maltoporin from Photorhabdus laumondii subsp. laumondii (strain DSM 15139 / CIP 105565 / TT01) (Photorhabdus luminescens subsp. laumondii).